A 239-amino-acid polypeptide reads, in one-letter code: tRNA (guanine-N(7)-)-methyltransferase (239 aa).

The S-adenosyl-L-methionine site is built by glutamate 69, glutamate 94, aspartate 121, and aspartate 144. The active site involves aspartate 144. Lysine 148 serves as a coordination point for substrate. Residues 150–155 (RHNKRR) are interaction with RNA. Substrate-binding positions include aspartate 180 and 217–220 (TKFE).

This sequence belongs to the class I-like SAM-binding methyltransferase superfamily. TrmB family. Monomer.

It catalyses the reaction guanosine(46) in tRNA + S-adenosyl-L-methionine = N(7)-methylguanosine(46) in tRNA + S-adenosyl-L-homocysteine. It functions in the pathway tRNA modification; N(7)-methylguanine-tRNA biosynthesis. Functionally, catalyzes the formation of N(7)-methylguanine at position 46 (m7G46) in tRNA. The chain is tRNA (guanine-N(7)-)-methyltransferase from Salmonella choleraesuis (strain SC-B67).